The chain runs to 348 residues: Growth-regulating factor 5 (348 aa).

Residues 24 to 59 (VFTAAQWAELEQQALIYKYLVAGVPVPGDLLLPIRP) form the QLQ domain. 2 short sequence motifs (bipartite nuclear localization signal) span residues 94-112 (KKLDPEPWRCRRTDGKKWR) and 130-137 (RGRNRSRK). Residues 97 to 141 (DPEPWRCRRTDGKKWRCSKEAHPDSKYCERHMHRGRNRSRKPVES) enclose the WRC domain. 2 disordered regions span residues 125-165 (ERHM…HDTD) and 306-348 (LRPF…PRCD). A compositionally biased stretch (basic residues) spans 127-136 (HMHRGRNRSR). The segment covering 148–161 (PQSQPQLSNVTTAT) has biased composition (polar residues). The span at 306–320 (LRPFFDEWPGRRDSW) shows a compositional bias: basic and acidic residues. The span at 329 to 340 (NQTSFSTTQLSI) shows a compositional bias: polar residues.

Belongs to the GRF family.

It localises to the nucleus. Functionally, transcription activator that plays a regulatory role in gibberellin-induced stem elongation. The protein is Growth-regulating factor 5 (GRF5) of Oryza sativa subsp. japonica (Rice).